A 158-amino-acid chain; its full sequence is 6,7-dimethyl-8-ribityllumazine synthase (158 aa).

5-amino-6-(D-ribitylamino)uracil contacts are provided by residues Phe-22, 57 to 59 (AVE), and 81 to 83 (AVI). 86 to 87 (GT) contacts (2S)-2-hydroxy-3-oxobutyl phosphate. His-89 (proton donor) is an active-site residue. Phe-114 is a 5-amino-6-(D-ribitylamino)uracil binding site. Arg-128 lines the (2S)-2-hydroxy-3-oxobutyl phosphate pocket.

Belongs to the DMRL synthase family. As to quaternary structure, forms an icosahedral capsid composed of 60 subunits, arranged as a dodecamer of pentamers.

The catalysed reaction is (2S)-2-hydroxy-3-oxobutyl phosphate + 5-amino-6-(D-ribitylamino)uracil = 6,7-dimethyl-8-(1-D-ribityl)lumazine + phosphate + 2 H2O + H(+). The protein operates within cofactor biosynthesis; riboflavin biosynthesis; riboflavin from 2-hydroxy-3-oxobutyl phosphate and 5-amino-6-(D-ribitylamino)uracil: step 1/2. Functionally, catalyzes the formation of 6,7-dimethyl-8-ribityllumazine by condensation of 5-amino-6-(D-ribitylamino)uracil with 3,4-dihydroxy-2-butanone 4-phosphate. This is the penultimate step in the biosynthesis of riboflavin. The protein is 6,7-dimethyl-8-ribityllumazine synthase of Shewanella loihica (strain ATCC BAA-1088 / PV-4).